Reading from the N-terminus, the 346-residue chain is Dihydroorotase (346 aa).

Residues His-13 and His-15 each coordinate Zn(2+). Residues 15 to 17 (HLR) and Asn-41 each bind substrate. Lys-99, His-136, and His-174 together coordinate Zn(2+). The residue at position 99 (Lys-99) is an N6-carboxylysine. His-136 contributes to the substrate binding site. Residue Leu-219 coordinates substrate. Asp-247 lines the Zn(2+) pocket. The active site involves Asp-247. Positions 251 and 263 each coordinate substrate.

The protein belongs to the metallo-dependent hydrolases superfamily. DHOase family. Class II DHOase subfamily. Homodimer. It depends on Zn(2+) as a cofactor.

It carries out the reaction (S)-dihydroorotate + H2O = N-carbamoyl-L-aspartate + H(+). Its pathway is pyrimidine metabolism; UMP biosynthesis via de novo pathway; (S)-dihydroorotate from bicarbonate: step 3/3. Its function is as follows. Catalyzes the reversible cyclization of carbamoyl aspartate to dihydroorotate. This chain is Dihydroorotase, found in Picosynechococcus sp. (strain ATCC 27264 / PCC 7002 / PR-6) (Agmenellum quadruplicatum).